A 472-amino-acid polypeptide reads, in one-letter code: ATP synthase subunit beta (472 aa).

157–164 (GGAGVGKT) provides a ligand contact to ATP.

It belongs to the ATPase alpha/beta chains family. F-type ATPases have 2 components, CF(1) - the catalytic core - and CF(0) - the membrane proton channel. CF(1) has five subunits: alpha(3), beta(3), gamma(1), delta(1), epsilon(1). CF(0) has three main subunits: a(1), b(2) and c(9-12). The alpha and beta chains form an alternating ring which encloses part of the gamma chain. CF(1) is attached to CF(0) by a central stalk formed by the gamma and epsilon chains, while a peripheral stalk is formed by the delta and b chains.

The protein resides in the cell inner membrane. The enzyme catalyses ATP + H2O + 4 H(+)(in) = ADP + phosphate + 5 H(+)(out). Functionally, produces ATP from ADP in the presence of a proton gradient across the membrane. The catalytic sites are hosted primarily by the beta subunits. The protein is ATP synthase subunit beta of Desulfatibacillum aliphaticivorans.